A 284-amino-acid polypeptide reads, in one-letter code: NAD kinase (284 aa).

The Proton acceptor role is filled by Asp-70. NAD(+) is bound by residues 70–71 (DG), 139–140 (NE), Lys-167, Asp-169, Leu-177, 180–185 (TAYNLS), and Gln-236.

It belongs to the NAD kinase family. The cofactor is a divalent metal cation.

It is found in the cytoplasm. It catalyses the reaction NAD(+) + ATP = ADP + NADP(+) + H(+). Functionally, involved in the regulation of the intracellular balance of NAD and NADP, and is a key enzyme in the biosynthesis of NADP. Catalyzes specifically the phosphorylation on 2'-hydroxyl of the adenosine moiety of NAD to yield NADP. In Helicobacter pylori (strain ATCC 700392 / 26695) (Campylobacter pylori), this protein is NAD kinase.